The following is a 724-amino-acid chain: Phosphoribosylformylglycinamidine synthase subunit PurL (724 aa).

The active site involves His-46. Positions 49 and 88 each coordinate ATP. Position 90 (Glu-90) interacts with Mg(2+). Substrate-binding positions include Ser-91–His-94 and Arg-113. His-92 acts as the Proton acceptor in catalysis. Asp-114 contacts Mg(2+). Residue Gln-237 coordinates substrate. Asp-265 contacts Mg(2+). Glu-309–Gln-311 is a binding site for substrate. Residues Asp-489 and Gly-526 each coordinate ATP. Asn-527 contributes to the Mg(2+) binding site. Ser-529 lines the substrate pocket.

This sequence belongs to the FGAMS family. Monomer. Part of the FGAM synthase complex composed of 1 PurL, 1 PurQ and 2 PurS subunits.

Its subcellular location is the cytoplasm. It carries out the reaction N(2)-formyl-N(1)-(5-phospho-beta-D-ribosyl)glycinamide + L-glutamine + ATP + H2O = 2-formamido-N(1)-(5-O-phospho-beta-D-ribosyl)acetamidine + L-glutamate + ADP + phosphate + H(+). Its pathway is purine metabolism; IMP biosynthesis via de novo pathway; 5-amino-1-(5-phospho-D-ribosyl)imidazole from N(2)-formyl-N(1)-(5-phospho-D-ribosyl)glycinamide: step 1/2. In terms of biological role, part of the phosphoribosylformylglycinamidine synthase complex involved in the purines biosynthetic pathway. Catalyzes the ATP-dependent conversion of formylglycinamide ribonucleotide (FGAR) and glutamine to yield formylglycinamidine ribonucleotide (FGAM) and glutamate. The FGAM synthase complex is composed of three subunits. PurQ produces an ammonia molecule by converting glutamine to glutamate. PurL transfers the ammonia molecule to FGAR to form FGAM in an ATP-dependent manner. PurS interacts with PurQ and PurL and is thought to assist in the transfer of the ammonia molecule from PurQ to PurL. This Granulibacter bethesdensis (strain ATCC BAA-1260 / CGDNIH1) protein is Phosphoribosylformylglycinamidine synthase subunit PurL.